The chain runs to 48 residues: Disintegrin accutin (48 aa).

Pyrrolidone carboxylic acid is present on Q1. Residues 1-48 enclose the Disintegrin domain; it reads QGAQCTAGPCCWPCKFLKEGTICRRARGDDLDDYCNGISADCPRNPYY. Intrachain disulfides connect C5–C11, C10–C35, and C23–C42. A Cell attachment site motif is present at residues 27–29; the sequence is RGD.

Belongs to the venom metalloproteinase (M12B) family. P-II subfamily. P-IIa sub-subfamily. Monomer (disintegrin). In terms of tissue distribution, expressed by the venom gland.

The protein resides in the secreted. Functionally, inhibit human platelet aggregation induced by ADP, collagen, thrombin or the thromboxane analog U46619 in platelet suspension with IC(50) values of 66-267 nM. Acts by inhibiting fibrinogen interaction with platelet receptors GPIIb/GPIIIa (ITGA2B/ITGB3). It also inhibits angiogenesis in vivo and in vitro by blocking integrin alpha-V/beta-3 (ITGAV/ITGB3) of endothelial cells and by inducing apoptosis. This chain is Disintegrin accutin, found in Deinagkistrodon acutus (Hundred-pace snake).